The chain runs to 557 residues: DNA ligase (557 aa).

Position 251 (Glu-251) interacts with ATP. Lys-253 acts as the N6-AMP-lysine intermediate in catalysis. ATP contacts are provided by Arg-258, Arg-273, Glu-303, Phe-342, Arg-418, and Lys-424.

It belongs to the ATP-dependent DNA ligase family. Mg(2+) is required as a cofactor.

It catalyses the reaction ATP + (deoxyribonucleotide)n-3'-hydroxyl + 5'-phospho-(deoxyribonucleotide)m = (deoxyribonucleotide)n+m + AMP + diphosphate.. Functionally, DNA ligase that seals nicks in double-stranded DNA during DNA replication, DNA recombination and DNA repair. This chain is DNA ligase, found in Methanosphaera stadtmanae (strain ATCC 43021 / DSM 3091 / JCM 11832 / MCB-3).